We begin with the raw amino-acid sequence, 389 residues long: Arrestin-C (389 aa).

It belongs to the arrestin family. In terms of tissue distribution, retina and pineal gland.

In terms of biological role, may play a role in an as yet undefined retina-specific signal transduction. Could bind to photoactivated-phosphorylated red/green opsins. The sequence is that of Arrestin-C (arr3) from Aquarana catesbeiana (American bullfrog).